A 465-amino-acid chain; its full sequence is UDP-N-acetylmuramate--L-alanine ligase (465 aa).

Residue 112–118 coordinates ATP; the sequence is GTHGKTT.

This sequence belongs to the MurCDEF family.

It is found in the cytoplasm. It carries out the reaction UDP-N-acetyl-alpha-D-muramate + L-alanine + ATP = UDP-N-acetyl-alpha-D-muramoyl-L-alanine + ADP + phosphate + H(+). It functions in the pathway cell wall biogenesis; peptidoglycan biosynthesis. In terms of biological role, cell wall formation. The chain is UDP-N-acetylmuramate--L-alanine ligase from Burkholderia orbicola (strain MC0-3).